Consider the following 1296-residue polypeptide: Phosphoribosylformylglycinamidine synthase (1296 aa).

The interval 304–323 (WPGAATGSGGEIRDEGATGR) is disordered. ATP-binding positions include 306-317 (GAATGSGGEIRD) and A677. Mg(2+) contacts are provided by D678, E717, N721, and D885. Position 887 (S887) interacts with ATP. Residues 1000–1013 (PDCADQEHQAKQDE) show a composition bias toward basic and acidic residues. The interval 1000 to 1019 (PDCADQEHQAKQDESDPGLN) is disordered. The 254-residue stretch at 1043–1296 (VAVLREQGVN…MFRNARKQLG (254 aa)) folds into the Glutamine amidotransferase type-1 domain. C1136 (nucleophile) is an active-site residue. Catalysis depends on residues H1261 and E1263.

This sequence in the N-terminal section; belongs to the FGAMS family. As to quaternary structure, monomer.

Its subcellular location is the cytoplasm. It carries out the reaction N(2)-formyl-N(1)-(5-phospho-beta-D-ribosyl)glycinamide + L-glutamine + ATP + H2O = 2-formamido-N(1)-(5-O-phospho-beta-D-ribosyl)acetamidine + L-glutamate + ADP + phosphate + H(+). It functions in the pathway purine metabolism; IMP biosynthesis via de novo pathway; 5-amino-1-(5-phospho-D-ribosyl)imidazole from N(2)-formyl-N(1)-(5-phospho-D-ribosyl)glycinamide: step 1/2. In terms of biological role, phosphoribosylformylglycinamidine synthase involved in the purines biosynthetic pathway. Catalyzes the ATP-dependent conversion of formylglycinamide ribonucleotide (FGAR) and glutamine to yield formylglycinamidine ribonucleotide (FGAM) and glutamate. The sequence is that of Phosphoribosylformylglycinamidine synthase from Yersinia pseudotuberculosis serotype I (strain IP32953).